The sequence spans 121 residues: HTH-type transcriptional regulator MerD (121 aa).

Residues 3-72 form the HTH merR-type domain; sequence AYPVSRLALD…LDALARLCRA (70 aa). The H-T-H motif DNA-binding region spans 6-25; the sequence is VSRLALDAGVSVHIVRDYLL.

The chain is HTH-type transcriptional regulator MerD (merD) from Pseudomonas aeruginosa.